A 335-amino-acid chain; its full sequence is UPF0065 protein BB4329 (335 aa).

Positions 1–39 (MNKNIPAFHRRCHGLVQGLARTLLLAPVLLALSVPAAQA) are cleaved as a signal peptide.

This sequence belongs to the UPF0065 (bug) family.

Its subcellular location is the periplasm. The sequence is that of UPF0065 protein BB4329 from Bordetella bronchiseptica (strain ATCC BAA-588 / NCTC 13252 / RB50) (Alcaligenes bronchisepticus).